The following is a 418-amino-acid chain: Tyrosine--tRNA ligase (418 aa).

Tyrosine 34 provides a ligand contact to L-tyrosine. The 'HIGH' region motif lies at 39 to 48 (PTADSLHLGH). Tyrosine 169 and glutamine 173 together coordinate L-tyrosine. Positions 229-233 (KFGKS) match the 'KMSKS' region motif. Lysine 232 is an ATP binding site. The S4 RNA-binding domain occupies 352-418 (HNIVEILVAA…GKKKYAVLTY (67 aa)).

This sequence belongs to the class-I aminoacyl-tRNA synthetase family. TyrS type 1 subfamily. Homodimer.

It localises to the cytoplasm. The catalysed reaction is tRNA(Tyr) + L-tyrosine + ATP = L-tyrosyl-tRNA(Tyr) + AMP + diphosphate + H(+). Functionally, catalyzes the attachment of tyrosine to tRNA(Tyr) in a two-step reaction: tyrosine is first activated by ATP to form Tyr-AMP and then transferred to the acceptor end of tRNA(Tyr). This is Tyrosine--tRNA ligase from Streptococcus pyogenes serotype M49 (strain NZ131).